The sequence spans 515 residues: WUSCHEL-related homeobox 12 (515 aa).

Polar residues-rich tracts occupy residues 23–32 (QQQPDMNGNG) and 44–57 (TAATTGNGKPSLLS). Disordered stretches follow at residues 23–76 (QQQP…WNPR), 130–156 (NKLRAAGHHHHHGRAAALPRASAPPST), and 176–195 (LLAATSSSSSSSDRSSGSSK). Residues 62-71 (EGTRNPEPKP) show a composition bias toward basic and acidic residues. A DNA-binding region (homeobox; WUS-type) is located at residues 68–132 (EPKPRWNPRP…NRKSRTKNKL (65 aa)). Over residues 130 to 143 (NKLRAAGHHHHHGR) the composition is skewed to basic residues. Composition is skewed to low complexity over residues 144–156 (AAALPRASAPPST) and 177–195 (LAATSSSSSSSDRSSGSSK).

Belongs to the WUS homeobox family.

It localises to the nucleus. Its function is as follows. Transcription factor which may be involved in developmental processes. This chain is WUSCHEL-related homeobox 12 (WOX12), found in Oryza sativa subsp. japonica (Rice).